A 359-amino-acid chain; its full sequence is Very-long-chain (3R)-3-hydroxyacyl-CoA dehydratase (359 aa).

Topologically, residues 1–144 are cytoplasmic; that stretch reads MSALTPHVYW…RKDPFLGLKK (144 aa). Residues 3–92 enclose the CS domain; sequence ALTPHVYWAQ…QEEVWWNRLT (90 aa). Positions 109 to 133 form a coiled coil; sequence LDESDAEMELREKEEKINKVSFESR. Residues 145-165 traverse the membrane as a helical segment; the sequence is GFLFMYNLVQFLGYSWIFVNM. The Lumenal portion of the chain corresponds to 166–186; the sequence is TVRLFILGQDSFYDTFHTIAD. Residues 187-207 traverse the membrane as a helical segment; it reads VMYFCQMLAIMEVINPAVGLV. The Cytoplasmic segment spans residues 208 to 209; the sequence is KT. A helical membrane pass occupies residues 210–230; the sequence is GVMPAFIQVMGRNFILFVIFG. The Lumenal segment spans residues 231-239; that stretch reads SLEDMQNKP. A helical transmembrane segment spans residues 240–260; that stretch reads VVFFVFYLWSTIEIFRYPFYM. Over 261-277 the chain is Cytoplasmic; the sequence is LACIDTEWKLLTWLRYT. A helical transmembrane segment spans residues 278–298; the sequence is IWMPLYPLGVLAEAVAVIQSI. Active-site residues include Tyr283 and Glu290. The Lumenal segment spans residues 299-317; the sequence is PIFDETKLLSIPLPKATGL. A helical transmembrane segment spans residues 318–338; sequence SLSFSYILQLYLVVMFLGLFI. At 339-359 the chain is on the cytoplasmic side; that stretch reads NFRHLFKQRTRRFRTKKRKAN.

The protein belongs to the very long-chain fatty acids dehydratase HACD family.

It localises to the endoplasmic reticulum membrane. It carries out the reaction a very-long-chain (3R)-3-hydroxyacyl-CoA = a very-long-chain (2E)-enoyl-CoA + H2O. It catalyses the reaction (3R)-hydroxyhexadecanoyl-CoA = (2E)-hexadecenoyl-CoA + H2O. Its pathway is lipid metabolism; fatty acid biosynthesis. Catalyzes the third of the four reactions of the long-chain fatty acids elongation cycle. This endoplasmic reticulum-bound enzymatic process, allows the addition of two carbons to the chain of long- and very long-chain fatty acids/VLCFAs per cycle. This enzyme catalyzes the dehydration of the 3-hydroxyacyl-CoA intermediate into trans-2,3-enoyl-CoA, within each cycle of fatty acid elongation. Thereby, it participates in the production of VLCFAs of different chain lengths that are involved in multiple biological processes as precursors of membrane lipids and lipid mediators. Involved in Rac1-signaling pathways leading to the modulation of gene expression. The chain is Very-long-chain (3R)-3-hydroxyacyl-CoA dehydratase from Danio rerio (Zebrafish).